Consider the following 210-residue polypeptide: Large ribosomal subunit protein uL4 (210 aa).

Residues 46–96 (QGNASTKTRAEVRGGGRKPWRQKGTGRARAGSNRSPLWRGGGVIFGPKPRD) form a disordered region. Basic residues predominate over residues 60 to 71 (GGRKPWRQKGTG).

It belongs to the universal ribosomal protein uL4 family. Part of the 50S ribosomal subunit.

Its function is as follows. One of the primary rRNA binding proteins, this protein initially binds near the 5'-end of the 23S rRNA. It is important during the early stages of 50S assembly. It makes multiple contacts with different domains of the 23S rRNA in the assembled 50S subunit and ribosome. In terms of biological role, forms part of the polypeptide exit tunnel. In Gloeothece citriformis (strain PCC 7424) (Cyanothece sp. (strain PCC 7424)), this protein is Large ribosomal subunit protein uL4.